A 423-amino-acid polypeptide reads, in one-letter code: Gamma-glutamyl phosphate reductase (423 aa).

The protein belongs to the gamma-glutamyl phosphate reductase family.

The protein localises to the cytoplasm. The enzyme catalyses L-glutamate 5-semialdehyde + phosphate + NADP(+) = L-glutamyl 5-phosphate + NADPH + H(+). The protein operates within amino-acid biosynthesis; L-proline biosynthesis; L-glutamate 5-semialdehyde from L-glutamate: step 2/2. Catalyzes the NADPH-dependent reduction of L-glutamate 5-phosphate into L-glutamate 5-semialdehyde and phosphate. The product spontaneously undergoes cyclization to form 1-pyrroline-5-carboxylate. The polypeptide is Gamma-glutamyl phosphate reductase (Pseudomonas putida (strain GB-1)).